Here is a 180-residue protein sequence, read N- to C-terminus: Large ribosomal subunit protein uL6 (180 aa).

This sequence belongs to the universal ribosomal protein uL6 family. As to quaternary structure, part of the 50S ribosomal subunit.

In terms of biological role, this protein binds to the 23S rRNA, and is important in its secondary structure. It is located near the subunit interface in the base of the L7/L12 stalk, and near the tRNA binding site of the peptidyltransferase center. The chain is Large ribosomal subunit protein uL6 from Flavobacterium johnsoniae (strain ATCC 17061 / DSM 2064 / JCM 8514 / BCRC 14874 / CCUG 350202 / NBRC 14942 / NCIMB 11054 / UW101) (Cytophaga johnsonae).